The primary structure comprises 124 residues: Ribonuclease pancreatic (124 aa).

Over residues 1-13 the composition is skewed to basic and acidic residues; sequence KESAAAKFERQHM. Residues 1 to 24 form a disordered region; sequence KESAAAKFERQHMDPSTSSASSSN. Substrate is bound by residues lysine 7 and arginine 10. The active-site Proton acceptor is histidine 12. Cystine bridges form between cysteine 26-cysteine 84, cysteine 40-cysteine 95, cysteine 58-cysteine 110, and cysteine 65-cysteine 72. Substrate is bound by residues 41 to 45, lysine 66, and arginine 85; that span reads KPVNT. The active-site Proton donor is the histidine 119.

It belongs to the pancreatic ribonuclease family. In terms of assembly, monomer. Interacts with and forms tight 1:1 complexes with RNH1. Dimerization of two such complexes may occur. Interaction with RNH1 inhibits this protein. As to expression, pancreas.

Its subcellular location is the secreted. It catalyses the reaction an [RNA] containing cytidine + H2O = an [RNA]-3'-cytidine-3'-phosphate + a 5'-hydroxy-ribonucleotide-3'-[RNA].. It carries out the reaction an [RNA] containing uridine + H2O = an [RNA]-3'-uridine-3'-phosphate + a 5'-hydroxy-ribonucleotide-3'-[RNA].. Its function is as follows. Endonuclease that catalyzes the cleavage of RNA on the 3' side of pyrimidine nucleotides. Acts on single-stranded and double-stranded RNA. This Cervus elaphus (Red deer) protein is Ribonuclease pancreatic (RNASE1).